Here is a 453-residue protein sequence, read N- to C-terminus: Macrophage scavenger receptor types I and II (453 aa).

Residues 1 to 50 (MAQWDDFPDQQEDTDSCTESVKFDARSVTALLPPHPKNGPTLQERMKSYK) lie on the Cytoplasmic side of the membrane. A Phosphoserine modification is found at serine 27. Residues 51 to 76 (TALITLYLIVFVVLVPIIGIVAAQLL) form a helical; Signal-anchor for type II membrane protein membrane-spanning segment. The tract at residues 77–108 (KWETKNCTVGSVNADISPSPEGKGNGSEDEMR) is spacer. Residues 77 to 453 (KWETKNCTVG…DEDAGVTCTT (377 aa)) lie on the Extracellular side of the membrane. Asparagine 82, asparagine 101, asparagine 142, asparagine 183, asparagine 220, asparagine 248, and asparagine 266 each carry an N-linked (GlcNAc...) asparagine glycan. Residues 194-255 (ETLNGRVQEN…LNNITNDLRL (62 aa)) are a coiled coil. Disordered stretches follow at residues 267–295 (ITLL…PGFP) and 313–349 (PGVR…QRQS). One can recognise a Collagen-like domain in the interval 272 to 343 (GPPGPPGEKG…KGQKGEKGSG (72 aa)). One can recognise an SRCR domain in the interval 352 to 452 (VRLVGGSGPH…HDEDAGVTCT (101 aa)). Intrachain disulfides connect cysteine 377–cysteine 441, cysteine 390–cysteine 451, and cysteine 421–cysteine 431.

Homotrimer. Interacts with MYO18A.

The protein localises to the membrane. Membrane glycoproteins implicated in the pathologic deposition of cholesterol in arterial walls during atherogenesis. Two types of receptor subunits exist. These receptors mediate the endocytosis of a diverse group of macromolecules, including modified low density lipoproteins (LDL). In Bos taurus (Bovine), this protein is Macrophage scavenger receptor types I and II (MSR1).